The following is a 480-amino-acid chain: Cytochrome b-c1 complex subunit 1, mitochondrial (480 aa).

The transit peptide at 1 to 34 directs the protein to the mitochondrion; that stretch reads MAASAVCRAAGAGTRVLLRTRRSPALLRSSDLRG. 2 positions are modified to N6-acetyllysine: Lys-111 and Lys-138. At Lys-163 the chain carries N6-acetyllysine; alternate. Lys-163 bears the N6-succinyllysine; alternate mark. Ser-212 carries the post-translational modification Phosphoserine. Lys-248 bears the N6-acetyllysine mark.

Belongs to the peptidase M16 family. UQCRC1/QCR1 subfamily. As to quaternary structure, component of the ubiquinol-cytochrome c oxidoreductase (cytochrome b-c1 complex, complex III, CIII), a multisubunit enzyme composed of 11 subunits. The complex is composed of 3 respiratory subunits cytochrome b, cytochrome c1 and Rieske protein UQCRFS1, 2 core protein subunits UQCRC1/QCR1 and UQCRC2/QCR2, and 6 low-molecular weight protein subunits UQCRH/QCR6, UQCRB/QCR7, UQCRQ/QCR8, UQCR10/QCR9, UQCR11/QCR10 and subunit 9, the cleavage product of Rieske protein UQCRFS1. The complex exists as an obligatory dimer and forms supercomplexes (SCs) in the inner mitochondrial membrane with NADH-ubiquinone oxidoreductase (complex I, CI) and cytochrome c oxidase (complex IV, CIV), resulting in different assemblies (supercomplex SCI(1)III(2)IV(1) and megacomplex MCI(2)III(2)IV(2)). Interacts with UQCC6. Interacts with STMP1.

Its subcellular location is the mitochondrion inner membrane. Component of the ubiquinol-cytochrome c oxidoreductase, a multisubunit transmembrane complex that is part of the mitochondrial electron transport chain which drives oxidative phosphorylation. The respiratory chain contains 3 multisubunit complexes succinate dehydrogenase (complex II, CII), ubiquinol-cytochrome c oxidoreductase (cytochrome b-c1 complex, complex III, CIII) and cytochrome c oxidase (complex IV, CIV), that cooperate to transfer electrons derived from NADH and succinate to molecular oxygen, creating an electrochemical gradient over the inner membrane that drives transmembrane transport and the ATP synthase. The cytochrome b-c1 complex catalyzes electron transfer from ubiquinol to cytochrome c, linking this redox reaction to translocation of protons across the mitochondrial inner membrane, with protons being carried across the membrane as hydrogens on the quinol. In the process called Q cycle, 2 protons are consumed from the matrix, 4 protons are released into the intermembrane space and 2 electrons are passed to cytochrome c. The 2 core subunits UQCRC1/QCR1 and UQCRC2/QCR2 are homologous to the 2 mitochondrial-processing peptidase (MPP) subunits beta-MPP and alpha-MPP respectively, and they seem to have preserved their MPP processing properties. May be involved in the in situ processing of UQCRFS1 into the mature Rieske protein and its mitochondrial targeting sequence (MTS)/subunit 9 when incorporated into complex III. Seems to play an important role in the maintenance of proper mitochondrial function in nigral dopaminergic neurons. The protein is Cytochrome b-c1 complex subunit 1, mitochondrial (UQCRC1) of Bos taurus (Bovine).